A 485-amino-acid chain; its full sequence is Hexokinase (485 aa).

Ser-15 carries the post-translational modification Phosphoserine. The region spanning 21 to 468 (ANLMEQIHGL…SGVGAAIIAC (448 aa)) is the Hexokinase domain. The segment at 75-208 (TGKETGDFLA…NIPINVVALI (134 aa)) is hexokinase small subdomain. Lys-111 contacts ATP. The segment at 151-177 (PLGFTFSYPASQKKINSGVLQRWTKGF) is glucose-binding. A hexokinase large subdomain region spans residues 209–457 (NDTTGTLVAS…HPIQLVAAED (249 aa)).

As to quaternary structure, monomer and homodimer. The monomeric form is active, the homodimeric form inactive.

The enzyme catalyses a D-hexose + ATP = a D-hexose 6-phosphate + ADP + H(+). It carries out the reaction D-fructose + ATP = D-fructose 6-phosphate + ADP + H(+). The catalysed reaction is D-glucose + ATP = D-glucose 6-phosphate + ADP + H(+). The protein operates within carbohydrate metabolism; hexose metabolism. Its pathway is carbohydrate degradation; glycolysis; D-glyceraldehyde 3-phosphate and glycerone phosphate from D-glucose: step 1/4. In terms of biological role, catalyzes the phosphorylation of hexose, such as D-glucose and D-fructose, to hexose 6-phosphate (D-glucose 6-phosphate and D-fructose 6-phosphate, respectively). Has higher affinity for D-glucose. Mediates the initial step of glycolysis by catalyzing phosphorylation of D-glucose to D-glucose 6-phosphate. The polypeptide is Hexokinase (RAG5) (Kluyveromyces lactis (strain ATCC 8585 / CBS 2359 / DSM 70799 / NBRC 1267 / NRRL Y-1140 / WM37) (Yeast)).